Here is a 261-residue protein sequence, read N- to C-terminus: Indole-3-glycerol phosphate synthase (261 aa).

This sequence belongs to the TrpC family.

It catalyses the reaction 1-(2-carboxyphenylamino)-1-deoxy-D-ribulose 5-phosphate + H(+) = (1S,2R)-1-C-(indol-3-yl)glycerol 3-phosphate + CO2 + H2O. It functions in the pathway amino-acid biosynthesis; L-tryptophan biosynthesis; L-tryptophan from chorismate: step 4/5. This Burkholderia multivorans (strain ATCC 17616 / 249) protein is Indole-3-glycerol phosphate synthase.